We begin with the raw amino-acid sequence, 581 residues long: Arginine--tRNA ligase (581 aa).

Positions P126 to H136 match the 'HIGH' region motif.

It belongs to the class-I aminoacyl-tRNA synthetase family. As to quaternary structure, monomer.

The protein localises to the cytoplasm. It carries out the reaction tRNA(Arg) + L-arginine + ATP = L-arginyl-tRNA(Arg) + AMP + diphosphate. This Shewanella frigidimarina (strain NCIMB 400) protein is Arginine--tRNA ligase.